The sequence spans 82 residues: ATP synthase subunit c (82 aa).

A run of 2 helical transmembrane segments spans residues 7–27 (LVALACGLIVGLGAIGASIGI) and 53–73 (FILAGLIDAAFLIGVAIALLF).

This sequence belongs to the ATPase C chain family. As to quaternary structure, F-type ATPases have 2 components, F(1) - the catalytic core - and F(0) - the membrane proton channel. F(1) has five subunits: alpha(3), beta(3), gamma(1), delta(1), epsilon(1). F(0) has three main subunits: a(1), b(2) and c(10-14). The alpha and beta chains form an alternating ring which encloses part of the gamma chain. F(1) is attached to F(0) by a central stalk formed by the gamma and epsilon chains, while a peripheral stalk is formed by the delta and b chains.

It is found in the cell inner membrane. F(1)F(0) ATP synthase produces ATP from ADP in the presence of a proton or sodium gradient. F-type ATPases consist of two structural domains, F(1) containing the extramembraneous catalytic core and F(0) containing the membrane proton channel, linked together by a central stalk and a peripheral stalk. During catalysis, ATP synthesis in the catalytic domain of F(1) is coupled via a rotary mechanism of the central stalk subunits to proton translocation. In terms of biological role, key component of the F(0) channel; it plays a direct role in translocation across the membrane. A homomeric c-ring of between 10-14 subunits forms the central stalk rotor element with the F(1) delta and epsilon subunits. This Acidovorax ebreus (strain TPSY) (Diaphorobacter sp. (strain TPSY)) protein is ATP synthase subunit c.